The chain runs to 476 residues: Aspartyl/glutamyl-tRNA(Asn/Gln) amidotransferase subunit B (476 aa).

It belongs to the GatB/GatE family. GatB subfamily. In terms of assembly, heterotrimer of A, B and C subunits.

It carries out the reaction L-glutamyl-tRNA(Gln) + L-glutamine + ATP + H2O = L-glutaminyl-tRNA(Gln) + L-glutamate + ADP + phosphate + H(+). The catalysed reaction is L-aspartyl-tRNA(Asn) + L-glutamine + ATP + H2O = L-asparaginyl-tRNA(Asn) + L-glutamate + ADP + phosphate + 2 H(+). Functionally, allows the formation of correctly charged Asn-tRNA(Asn) or Gln-tRNA(Gln) through the transamidation of misacylated Asp-tRNA(Asn) or Glu-tRNA(Gln) in organisms which lack either or both of asparaginyl-tRNA or glutaminyl-tRNA synthetases. The reaction takes place in the presence of glutamine and ATP through an activated phospho-Asp-tRNA(Asn) or phospho-Glu-tRNA(Gln). The protein is Aspartyl/glutamyl-tRNA(Asn/Gln) amidotransferase subunit B of Clostridium botulinum (strain ATCC 19397 / Type A).